Reading from the N-terminus, the 698-residue chain is Serine/alanine racemase (698 aa).

The Cytoplasmic portion of the chain corresponds to 1-10; sequence MKNKGIDQFR. A helical transmembrane segment spans residues 11-31; sequence VIAAMMVVAIHCLPLHYLWPE. The Extracellular portion of the chain corresponds to 32–42; sequence GDILITLTIFR. Residues 43 to 63 traverse the membrane as a helical segment; sequence VAVPFFFMISGYYVFAELAVA. The Cytoplasmic segment spans residues 64-81; the sequence is NSYPSRQRVFNFIKKQLK. A helical transmembrane segment spans residues 82–102; that stretch reads VYLLATLMFLPLALYSQTIGF. Residues 103-121 lie on the Extracellular side of the membrane; the sequence is DLPVGTLVQVLLVNGILYH. A helical membrane pass occupies residues 122–142; sequence LWYFPALITGSLLLTSLLIHV. The Cytoplasmic segment spans residues 143-147; that stretch reads SFKKV. Residues 148–168 form a helical membrane-spanning segment; sequence FWLAAGLYLIGLGGDSWFGLI. Over 169 to 183 the chain is Extracellular; it reads QQTPIEPFYTAVFHL. A helical membrane pass occupies residues 184 to 204; it reads LDGTRNGIFFTPLFLCLGVLV. Over 205-216 the chain is Cytoplasmic; it reads RKQSEKRSLSKT. Residues 217-237 traverse the membrane as a helical segment; it reads ALFFLISLIGLLIESAYLHGF. Residues 238–244 are Extracellular-facing; it reads SIPKHDS. The helical transmembrane segment at 245–265 threads the bilayer; it reads MYLFLPVVLFFLFPLILRWHP. The Cytoplasmic portion of the chain corresponds to 266 to 274; the sequence is HRTWKHPGQ. The helical transmembrane segment at 275–295 threads the bilayer; sequence LSLWLYLLHPYTIAGTHFLSQ. Over 296 to 301 the chain is Extracellular; sequence KISILQ. Residues 302–322 traverse the membrane as a helical segment; that stretch reads NNLINYLVVLILTIGFICLFL. At 323–698 the chain is on the cytoplasmic side; the sequence is RQKHSWFRHK…IGPRVSARIK (376 aa). The segment at 332 to 698 is racemase; it reads KQTTPVKRAV…IGPRVSARIK (367 aa). Catalysis depends on K371, which acts as the Proton acceptor. Position 371 is an N6-(pyridoxal phosphate)lysine (K371). R465 contributes to the substrate binding site. Y597 acts as the Proton acceptor in catalysis. M646 is a binding site for substrate.

In the N-terminal section; belongs to the acyltransferase 3 family. This sequence in the C-terminal section; belongs to the alanine racemase family. In terms of assembly, homodimer. Pyridoxal 5'-phosphate is required as a cofactor.

The protein localises to the cell membrane. It carries out the reaction L-alanine = D-alanine. It catalyses the reaction L-serine = D-serine. It participates in amino-acid biosynthesis; D-alanine biosynthesis; D-alanine from L-alanine: step 1/1. Catalyzes the interconversion of L-serine and D-serine, and L-alanine and D-alanine. L-alanine is racemized at a rate that is 14% of that of L-serine. Together with VanC/VanC1 and VanXYC, required for vancomycin resistance in E.gallinarum strain BM4174. The polypeptide is Serine/alanine racemase (Enterococcus gallinarum).